Here is a 484-residue protein sequence, read N- to C-terminus: ATP synthase subunit beta (484 aa).

168-175 serves as a coordination point for ATP; sequence GGAGVGKT.

The protein belongs to the ATPase alpha/beta chains family. F-type ATPases have 2 components, CF(1) - the catalytic core - and CF(0) - the membrane proton channel. CF(1) has five subunits: alpha(3), beta(3), gamma(1), delta(1), epsilon(1). CF(0) has three main subunits: a(1), b(2) and c(9-12). The alpha and beta chains form an alternating ring which encloses part of the gamma chain. CF(1) is attached to CF(0) by a central stalk formed by the gamma and epsilon chains, while a peripheral stalk is formed by the delta and b chains.

The protein localises to the cell membrane. It catalyses the reaction ATP + H2O + 4 H(+)(in) = ADP + phosphate + 5 H(+)(out). Functionally, produces ATP from ADP in the presence of a proton gradient across the membrane. The catalytic sites are hosted primarily by the beta subunits. The chain is ATP synthase subunit beta from Renibacterium salmoninarum (strain ATCC 33209 / DSM 20767 / JCM 11484 / NBRC 15589 / NCIMB 2235).